The chain runs to 458 residues: MSFDFIKDKNKHIHFIGIGGISMSGLAEILLYNNFSISGSDMNSSPITEKLKDKGAKIYIGHKKENVKNADLIVYTAAIASDNPEIIEAKEKNIKLMDRADFLGNLMKGYKYNIAISGTHGKTTTTSMLSHVALKANVDPTILVGGNLDIINGNVRVGESDFFITEACEYKSSFLKFFPYIGVILNIDADHLDYYKDLDDIKNAFSKFIKLIPKDGYLVAYGEDKNIQSIIKEANCNVITYGINSGDIQAHNIEYDEKACGNFDVVKDNQKLFSVKLNVPGKHNILNSLASICIGLASDMKDKDIIEGIESFFGTHRRFELKGCKNNITVIDDYAHHPTEISATLDAAKKYPHNKMFCVFQPHTYSRTLTLFDDFTKCFDNADEIILADIYAAREKDTGIINSNMLGDKLRERGLKCTNFHKFDDIKNYLIENAKDGDLILTVGAGDIYKVGEMYINL.

118–124 (GTHGKTT) provides a ligand contact to ATP.

The protein belongs to the MurCDEF family.

It is found in the cytoplasm. The catalysed reaction is UDP-N-acetyl-alpha-D-muramate + L-alanine + ATP = UDP-N-acetyl-alpha-D-muramoyl-L-alanine + ADP + phosphate + H(+). It functions in the pathway cell wall biogenesis; peptidoglycan biosynthesis. Functionally, cell wall formation. In Clostridium botulinum (strain Okra / Type B1), this protein is UDP-N-acetylmuramate--L-alanine ligase.